Here is a 347-residue protein sequence, read N- to C-terminus: Heme A synthase (347 aa).

Helical transmembrane passes span 17 to 37 (LANW…VGGI), 106 to 126 (GIGA…AIPA), 132 to 152 (MIGI…MVYS), 165 to 185 (LATH…TVLD), 202 to 222 (ALAI…AFVA), 260 to 280 (IVVQ…ALAV), 295 to 315 (AVAT…LTGV), and 317 to 337 (IAVA…LLWA). His266 contacts heme. His323 is a binding site for heme.

Belongs to the COX15/CtaA family. Type 2 subfamily. As to quaternary structure, interacts with CtaB. Heme b is required as a cofactor.

The protein resides in the cell membrane. The enzyme catalyses Fe(II)-heme o + 2 A + H2O = Fe(II)-heme a + 2 AH2. The protein operates within porphyrin-containing compound metabolism; heme A biosynthesis; heme A from heme O: step 1/1. Catalyzes the conversion of heme O to heme A by two successive hydroxylations of the methyl group at C8. The first hydroxylation forms heme I, the second hydroxylation results in an unstable dihydroxymethyl group, which spontaneously dehydrates, resulting in the formyl group of heme A. The protein is Heme A synthase of Rhizorhabdus wittichii (strain DSM 6014 / CCUG 31198 / JCM 15750 / NBRC 105917 / EY 4224 / RW1) (Sphingomonas wittichii).